The sequence spans 52 residues: Proteinase inhibitor PSI-1.2 (52 aa).

Intrachain disulfides connect cysteine 3-cysteine 32, cysteine 7-cysteine 28, cysteine 16-cysteine 38, and cysteine 31-cysteine 49.

Potent inhibitor of trypsin and a weaker inhibitor of chymotrypsin. It does not inhibit elastase and subtilisin DY. The protein is Proteinase inhibitor PSI-1.2 of Capsicum annuum (Capsicum pepper).